The chain runs to 219 residues: MGQKVNPHGLRVGVIKDWDSRWYAEKDYADLLHEDFVIREYIENKMKDASVSKVEIERAANRVNISLHTAKPGMVIGKGGSEIESLRKHITKIADGKRVHINVVEVKNADAVAKLVAENIARQLEGRVSFRRAMKQSIQRSMRTGIKGIKTEVSGRLGGADIARSEKYSEGTVPLHTLRADIDYGTAEADTTYGKIGVKVWLYHGEVLPTKNNTAKNAE.

Residues 38 to 107 (IREYIENKMK…RVHINVVEVK (70 aa)) enclose the KH type-2 domain.

Belongs to the universal ribosomal protein uS3 family. In terms of assembly, part of the 30S ribosomal subunit. Forms a tight complex with proteins S10 and S14.

Binds the lower part of the 30S subunit head. Binds mRNA in the 70S ribosome, positioning it for translation. This chain is Small ribosomal subunit protein uS3, found in Exiguobacterium sp. (strain ATCC BAA-1283 / AT1b).